The following is a 354-amino-acid chain: MGCVTSQEDKAAVERSKQIDKSLRMDGEKAAREVKLLLLGAGESGKSTIVKQMKIIHEKGYSQEECLQYKPVVYSNAIQSMIAIIKAMGQLKIQFGHPDRAEDARQFFALAGHADEGEMSAELSGIMKRLWKDVGVQECFSRSREYQLNDSAEYYLNALDRISAPGYIPTEQDVLRTRVKTTGIVETHFTFKDLHFKMFDVGGQRSERKKWIHCFEGVTAIIFIVAMSEYDLTLAEDQEMNRMMESMKLFDSICNNKWFTETSIILFLNKKDLFEEKIKKSPLTICFPEYTGANTYEEAAAYIQLQFENLNKKKDTKEIYSHFTCATDTNNVQFVFDAVTDVIIKNNLKDCGLF.

Glycine 2 carries N-myristoyl glycine lipidation. The S-palmitoyl cysteine moiety is linked to residue cysteine 3. Residues 32–354 (REVKLLLLGA…KNNLKDCGLF (323 aa)) form the G-alpha domain. The G1 motif stretch occupies residues 35-48 (KLLLLGAGESGKST). GTP-binding positions include 40–47 (GAGESGKS), 175–181 (LRTRVKT), 200–204 (DVGGQ), 269–272 (NKKD), and alanine 326. Mg(2+) contacts are provided by serine 47 and threonine 181. The interval 173 to 181 (DVLRTRVKT) is G2 motif. The interval 196–205 (FKMFDVGGQR) is G3 motif. The segment at 265–272 (ILFLNKKD) is G4 motif. A G5 motif region spans residues 324 to 329 (TCATDT).

Belongs to the G-alpha family. G(i/o/t/z) subfamily. G proteins are composed of 3 units; alpha, beta and gamma. The alpha chain contains the guanine nucleotide binding site.

Guanine nucleotide-binding proteins (G proteins) are involved as modulators or transducers in various transmembrane signaling systems. The G(i) proteins are involved in hormonal regulation of adenylate cyclase: they inhibit the cyclase in response to beta-adrenergic stimuli. The polypeptide is Guanine nucleotide-binding protein G(i) subunit alpha (Lymnaea stagnalis (Great pond snail)).